Reading from the N-terminus, the 377-residue chain is Virion membrane protein OPG143 (377 aa).

Gly-2 carries N-myristoyl glycine; by host lipidation. Residues 2–342 lie on the Virion surface side of the membrane; it reads GAAVTLNRIK…VKDKIKLPTW (341 aa). A helical; Signal-anchor for type II membrane protein membrane pass occupies residues 343–363; sequence LGAAITLVVISVIFYFISIYS. Over 364-377 the chain is Intravirion; that stretch reads RPKIKTNDINVRRR.

It belongs to the orthopoxvirus OPG143 family. As to quaternary structure, part of a stable entry-fusion complex (EFC) which is at least composed of proteins OPG143, OPG147, OPG155, OPG086, OPG094, OPG107, OPG104, and OPG099. Formation of the viral membrane is necessary for the assembly of the complex. Interacts with OPG094. Interacts with OPG153. Post-translationally, most cysteines are linked by disulfide bonds. They are created by the viral disulfide bond formation pathway, a poxvirus-specific redox pathway that operates on the cytoplasmic side of the MV membranes.

Its subcellular location is the virion membrane. Envelope protein part of the entry-fusion complex responsible for the virus membrane fusion with host cell membrane during virus entry. Also plays a role in cell-cell fusion (syncytium formation). This Vaccinia virus (strain Western Reserve) (VACV) protein is Virion membrane protein OPG143 (OPG143).